A 449-amino-acid chain; its full sequence is Telomere resolvase ResT (449 aa).

No cofactors were found to be necessary. serves as cofactor.

It localises to the cytoplasm. Its subcellular location is the nucleoid. Its function is as follows. Catalyzes the conservative, sequence-specific DNA breakage and reunion reaction that generates two hairpin telomeres from a replicated telomere substrate. Breaks two phosphodiester bonds in a single DNA duplex and joins each end with the opposite DNA strand to form covalently closed hairpin telomeres. In vitro relaxed-circular, open-circular and linearized plasmids, but not supercoiled DNA, are all substrates. Cleavage is position-dependent relative to conserved sequence elements. The polypeptide is Telomere resolvase ResT (Borreliella burgdorferi (strain ATCC 35210 / DSM 4680 / CIP 102532 / B31) (Borrelia burgdorferi)).